A 267-amino-acid polypeptide reads, in one-letter code: Strigolactone esterase RMS3 (267 aa).

Catalysis depends on serine 96, which acts as the Nucleophile. Residues aspartate 218 and histidine 247 contribute to the active site.

This sequence belongs to the AB hydrolase superfamily.

It is found in the cytoplasm. It localises to the nucleus. Functionally, involved in strigolactone signaling pathway. Functions downstream of strigolactone synthesis, as a component of hormone signaling and as an enzyme that participates in the conversion of strigolactones to the bioactive form. Binds and hydrolyzes the synthetic strigolactone analog GR24 and its enantiomers in vitro. Forms a stable covalent complex with the D-ring of strigolactone, which is essential for hormone bioactivity. The D-ring is attached to His-247 of the catalytic triad. The hydrolysis of strigolactone into a covalently linked intermediate molecule is required to trigger strigolactone signaling. This mechanism defines RMS3 as a non-canonical hormone receptor with dual functions to generate and sense the active form of strigolactone. Strigolactones are hormones that inhibit tillering and shoot branching through the MAX-dependent pathway, contribute to the regulation of shoot architectural response to phosphate-limiting conditions and function as rhizosphere signal that stimulates hyphal branching of arbuscular mycorrhizal fungi and trigger seed germination of root parasitic weeds. The sequence is that of Strigolactone esterase RMS3 from Pisum sativum (Garden pea).